The following is a 178-amino-acid chain: Flagellar transcriptional regulator FlhC (178 aa).

4 residues coordinate Zn(2+): cysteine 138, cysteine 141, cysteine 158, and cysteine 161.

This sequence belongs to the FlhC family. As to quaternary structure, heterohexamer composed of two FlhC and four FlhD subunits. Each FlhC binds a FlhD dimer, forming a heterotrimer, and a hexamer assembles by dimerization of two heterotrimers. Requires Zn(2+) as cofactor.

It is found in the cytoplasm. In terms of biological role, functions in complex with FlhD as a master transcriptional regulator that regulates transcription of several flagellar and non-flagellar operons by binding to their promoter region. Activates expression of class 2 flagellar genes, including fliA, which is a flagellum-specific sigma factor that turns on the class 3 genes. Also regulates genes whose products function in a variety of physiological pathways. This chain is Flagellar transcriptional regulator FlhC, found in Erwinia tasmaniensis (strain DSM 17950 / CFBP 7177 / CIP 109463 / NCPPB 4357 / Et1/99).